A 300-amino-acid chain; its full sequence is Secreted mono- and diacylglycerol lipase LIP4 (300 aa).

A signal peptide spans 1-16; that stretch reads MRFLAFLLCLVPLALC. The cysteines at positions 54 and 293 are disulfide-linked. S167 acts as the Nucleophile in catalysis. D224 is a catalytic residue.

The protein belongs to the AB hydrolase superfamily. Lipase family. Class 3 subfamily.

It is found in the secreted. The catalysed reaction is a monoacylglycerol + H2O = glycerol + a fatty acid + H(+). It carries out the reaction a diacylglycerol + H2O = a monoacylglycerol + a fatty acid + H(+). In terms of biological role, secreted lipase involved in Dandruff and seborrheic dermatitis (D/SD) probably via lipase-mediated breakdown of sebaceous lipids and release of irritating free fatty acids. Shows activity against monoglyceride and diglyceride substrates. Due to an absence of fatty acid synthase genes in Malassezia species, secretory lipases are essential for the yeast to generate free fatty acids from degradation of sebum and assimilate them as lipid sources for growth. Plays an essential role at the pathogen-host interface during disease progression. This Malassezia restricta (Seborrheic dermatitis infection agent) protein is Secreted mono- and diacylglycerol lipase LIP4.